The primary structure comprises 245 residues: MTLTASSSSRAVTNSPVVVALDYHNRDDALSFVDKIDPRDCRLKVGKEMFTLFGPQFVRELQQRGFDIFLDLKFHDIPNTAAHAVAAAADLGVWMVNVHASGGARMMTAAREALVPFGKDAPLLIAVTVLTSMEASDLVDLGMTLSPADYAERLAALTQKCGLDGVVCSAQEAVRFKQVFGQEFKLVTPGIRPQGSEAGDQRRIMTPEQALSAGVDYMVIGRPVTQSVDPAQTLKAINASLQRSA.

Substrate is bound by residues aspartate 22, lysine 44, 71–80, threonine 131, arginine 192, glutamine 201, glycine 221, and arginine 222; that span reads DLKFHDIPNT. The active-site Proton donor is the lysine 73.

Belongs to the OMP decarboxylase family. Type 1 subfamily. Homodimer.

It carries out the reaction orotidine 5'-phosphate + H(+) = UMP + CO2. Its pathway is pyrimidine metabolism; UMP biosynthesis via de novo pathway; UMP from orotate: step 2/2. Functionally, catalyzes the decarboxylation of orotidine 5'-monophosphate (OMP) to uridine 5'-monophosphate (UMP). This Escherichia coli (strain 55989 / EAEC) protein is Orotidine 5'-phosphate decarboxylase.